A 540-amino-acid polypeptide reads, in one-letter code: Signal peptide peptidase-like 2 (540 aa).

An N-terminal signal peptide occupies residues 1-27 (MDSLRFLRILLLSSSILLLSLRSTVTA). Residues 28–196 (GDIVHQDNLA…PRRPAVDVAE (169 aa)) are Lumenal-facing. The N-linked (GlcNAc...) asparagine glycan is linked to asparagine 83. In terms of domain architecture, PA spans 95 to 173 (SCTPLKNKLS…QDAGASLQKM (79 aa)). Asparagine 176 carries N-linked (GlcNAc...) asparagine glycosylation. A helical transmembrane segment spans residues 197-217 (VFLWLMAIGTILCASYWSAWS). At 218–248 (AREAAIEHDKLLKDAIDEIPNTNDGGSGVVE) the chain is on the cytoplasmic side. The helical transmembrane segment at 249–269 (INSISAIFFVVLASGFLVILY) threads the bilayer. The Lumenal portion of the chain corresponds to 270–278 (KLMSYWFVE). The chain crosses the membrane as a helical span at residues 279-299 (LLVVVFCIGGVEGLQTCLVAL). Residues 300-319 (LSRWFQRAADTYVKVPFLGP) are Cytoplasmic-facing. The helical transmembrane segment at 320 to 340 (ISYLTLAVSPFCIVFAVLWAV) threads the bilayer. Topologically, residues 341-345 (YRVHS) are lumenal. The chain crosses the membrane as a helical span at residues 346–366 (FAWIGQDVLGIALIITVLQIV). Residues 367–370 (HVPN) lie on the Cytoplasmic side of the membrane. Residues 371–391 (LKVGTVLLSCAFLYDIFWVFV) form a helical membrane-spanning segment. Aspartate 385 is a catalytic residue. Over 392–429 (SKKLFHESVMIVVARGDKSGEDGIPMLLKIPRMFDPWG) the chain is Lumenal. A helical transmembrane segment spans residues 430–450 (GYSIIGFGDILLPGLLIAFAL). Aspartate 438 is an active-site residue. Residues 451–462 (RYDWLANKTLRT) lie on the Cytoplasmic side of the membrane. A helical membrane pass occupies residues 463 to 483 (GYFIWAMVAYGLGLLITYVAL). Residues 484 to 488 (NLMDG) are Lumenal-facing. Residues 489–509 (HGQPALLYIVPFTLGTMLTLA) form a helical membrane-spanning segment. Positions 492–494 (PAL) match the PAL motif. Residues 510-540 (RKRDDLWILWTKGEPERACPHHVRLEQCSEK) are Cytoplasmic-facing.

Belongs to the peptidase A22B family. Post-translationally, glycosylated. As to expression, ubiquitous.

The protein localises to the endosome membrane. Its function is as follows. Intramembrane-cleaving aspartic protease (I-CLiP) that cleaves type II membrane signal peptides in the hydrophobic plane of the membrane. In Arabidopsis thaliana (Mouse-ear cress), this protein is Signal peptide peptidase-like 2 (SPPL2).